The sequence spans 595 residues: Tectonic-3 (595 aa).

A signal peptide spans M1 to P22. A disordered region spans residues Q23 to S62. Residues Q23–K575 are Extracellular-facing. The span at P49–S62 shows a compositional bias: polar residues. N-linked (GlcNAc...) asparagine glycosylation is found at N167 and N336. A helical membrane pass occupies residues D576–T594. Position 595 (K595) is a topological domain, cytoplasmic.

Belongs to the tectonic family. As to quaternary structure, part of the tectonic-like complex (also named B9 complex).

The protein localises to the membrane. Its function is as follows. Part of the tectonic-like complex which is required for tissue-specific ciliogenesis and may regulate ciliary membrane composition. May be involved in apoptosis regulation. Necessary for signal transduction through the sonic hedgehog (Shh) signaling pathway. The polypeptide is Tectonic-3 (Tctn3) (Mus musculus (Mouse)).